The sequence spans 697 residues: Ribosomal RNA large subunit methyltransferase K/L (697 aa).

The THUMP domain occupies 43–154 (ILYNSLMWSR…QNLVHIMLDL (112 aa)).

This sequence belongs to the methyltransferase superfamily. RlmKL family.

Its subcellular location is the cytoplasm. The enzyme catalyses guanosine(2445) in 23S rRNA + S-adenosyl-L-methionine = N(2)-methylguanosine(2445) in 23S rRNA + S-adenosyl-L-homocysteine + H(+). The catalysed reaction is guanosine(2069) in 23S rRNA + S-adenosyl-L-methionine = N(2)-methylguanosine(2069) in 23S rRNA + S-adenosyl-L-homocysteine + H(+). Functionally, specifically methylates the guanine in position 2445 (m2G2445) and the guanine in position 2069 (m7G2069) of 23S rRNA. The sequence is that of Ribosomal RNA large subunit methyltransferase K/L from Buchnera aphidicola subsp. Schizaphis graminum (strain Sg).